The chain runs to 216 residues: Probable GTP-binding protein EngB (216 aa).

Positions Pro-26–Glu-210 constitute an EngB-type G domain. GTP-binding positions include Gly-34–Ser-41, Gly-59–Lys-63, Asp-76–Gly-79, Asn-156–Asp-159, and Ile-189–Ala-191. Mg(2+)-binding residues include Ser-41 and Thr-61.

The protein belongs to the TRAFAC class TrmE-Era-EngA-EngB-Septin-like GTPase superfamily. EngB GTPase family. Mg(2+) serves as cofactor.

In terms of biological role, necessary for normal cell division and for the maintenance of normal septation. The sequence is that of Probable GTP-binding protein EngB from Pyrococcus horikoshii (strain ATCC 700860 / DSM 12428 / JCM 9974 / NBRC 100139 / OT-3).